The following is a 137-amino-acid chain: Large ribosomal subunit protein uL16 (137 aa).

This sequence belongs to the universal ribosomal protein uL16 family. In terms of assembly, part of the 50S ribosomal subunit.

Binds 23S rRNA and is also seen to make contacts with the A and possibly P site tRNAs. The chain is Large ribosomal subunit protein uL16 from Legionella pneumophila (strain Paris).